Here is a 383-residue protein sequence, read N- to C-terminus: Delta(12)-fatty-acid desaturase FAD2 (383 aa).

2 helical membrane passes run 56–76 (VVYD…YFHL) and 84–104 (VAWP…WVIA). The Histidine box-1 motif lies at 105–109 (HECGH). A helical membrane pass occupies residues 117–137 (LLDDIVGLVLHSCLLVPYFSW). A Histidine box-2 motif is present at residues 141 to 145 (HRRHH). Helical transmembrane passes span 179 to 199 (LFTL…FNVS), 225 to 245 (IYIS…LAAA), and 249 to 269 (AWVI…LVMI). Residues 315-319 (HVAHH) carry the Histidine box-3 motif.

This sequence belongs to the fatty acid desaturase type 1 family. Expressed in leaves and seeds.

The protein localises to the endoplasmic reticulum membrane. It catalyses the reaction (9Z)-octadecenoyl-CoA + 2 Fe(II)-[cytochrome b5] + O2 + 2 H(+) = (9Z,12Z)-octadecadienoyl-CoA + 2 Fe(III)-[cytochrome b5] + 2 H2O. The enzyme catalyses (9Z)-hexadecenoyl-CoA + 2 Fe(II)-[cytochrome b5] + O2 + 2 H(+) = (9Z,12Z)-hexadecadienoyl-CoA + 2 Fe(III)-[cytochrome b5] + 2 H2O. It functions in the pathway lipid metabolism; polyunsaturated fatty acid biosynthesis. In terms of biological role, catalyzes the desaturation of oleic acid (18:1(9Z)) to linoleic acid (18:2(9Z,12Z)). The polypeptide is Delta(12)-fatty-acid desaturase FAD2 (Vernicia fordii (Tung)).